We begin with the raw amino-acid sequence, 139 residues long: Putative pre-16S rRNA nuclease (139 aa).

The protein belongs to the YqgF nuclease family.

The protein localises to the cytoplasm. Could be a nuclease involved in processing of the 5'-end of pre-16S rRNA. In Streptococcus pneumoniae serotype 19F (strain G54), this protein is Putative pre-16S rRNA nuclease.